A 444-amino-acid polypeptide reads, in one-letter code: tRNA (guanine-N(7)-)-methyltransferase non-catalytic subunit TRM82 (444 aa).

WD repeat units follow at residues 1-47 (MSVI…WSDD), 48-99 (FDKI…LGAP), 100-147 (PIYS…KRFC), 148-192 (FSKR…EPIL), 193-237 (GHVS…DKWL), 238-279 (FGHK…STFD), and 308-354 (FAVS…ITFP). The tract at residues 55-92 (RNTTAKEQQGQSSENENENKKLKSNKGDSIKRTAAKVP) is disordered. A compositionally biased stretch (basic and acidic residues) spans 71-85 (NENKKLKSNKGDSIK). Ser-93 carries the phosphoserine modification.

The protein belongs to the WD repeat TRM82 family. Forms a heterodimer with the catalytic subunit TRM8.

The protein resides in the nucleus. It functions in the pathway tRNA modification; N(7)-methylguanine-tRNA biosynthesis. Functionally, required for the formation of N(7)-methylguanine at position 46 (m7G46) in tRNA, a modification required to maintain stability of tRNAs; its absence resulting in tRNA decay. In the complex, it is required to stabilize and induce conformational changes of the catalytic subunit. In Saccharomyces cerevisiae (strain RM11-1a) (Baker's yeast), this protein is tRNA (guanine-N(7)-)-methyltransferase non-catalytic subunit TRM82.